We begin with the raw amino-acid sequence, 523 residues long: Pentatricopeptide repeat-containing protein At3g21470 (523 aa).

PPR repeat units follow at residues 10-43 (GEFHVSNLIKNHISRGSPIQALVLYGGIRRRGVY), 44-79 (FPGWVPLILRACACVVPRVVLGKLLHSESIKFGVCS), 80-114 (DVMVGSSLISMYGKCGCVVSARKVFDEMPERNVAT), 115-141 (WNAMIGGYMSNGDAVLASGLFEEISVC), 143-173 (NTVTWIEMIKGYGKRIEIEKARELFERMPFE), 176-210 (NVKAWSVMLGVYVNNRKMEDARKFFEDIPEKNAFV), 211-237 (WSLMMSGYFRIGDVHEARAIFYRVFAR), 238-272 (DLVIWNTLIAGYAQNGYSDDAIDAFFNMQGEGYEP), 273-307 (DAVTVSSILSACAQSGRLDVGREVHSLINHRGIEL), 308-338 (NQFVSNALIDMYAKCGDLENATSVFESISVR), 339-373 (SVACCNSMISCLAIHGKGKEALEMFSTMESLDLKP), 374-408 (DEITFIAVLTACVHGGFLMEGLKIFSEMKTQDVKP), and 409-439 (NVKHFGCLIHLLGRSGKLKEAYRLVKEMHVK). The type E motif stretch occupies residues 444–523 (VLGALLGACK…SPGLSSLVLT (80 aa)).

The protein belongs to the PPR family. PCMP-E subfamily.

This is Pentatricopeptide repeat-containing protein At3g21470 (PCMP-E29) from Arabidopsis thaliana (Mouse-ear cress).